Consider the following 89-residue polypeptide: Small ribosomal subunit protein uS15 (89 aa).

It belongs to the universal ribosomal protein uS15 family. In terms of assembly, part of the 30S ribosomal subunit. Forms a bridge to the 50S subunit in the 70S ribosome, contacting the 23S rRNA.

In terms of biological role, one of the primary rRNA binding proteins, it binds directly to 16S rRNA where it helps nucleate assembly of the platform of the 30S subunit by binding and bridging several RNA helices of the 16S rRNA. Functionally, forms an intersubunit bridge (bridge B4) with the 23S rRNA of the 50S subunit in the ribosome. The sequence is that of Small ribosomal subunit protein uS15 from Streptococcus mutans serotype c (strain ATCC 700610 / UA159).